The sequence spans 506 residues: ATP synthase subunit alpha, chloroplastic (506 aa).

ATP is bound at residue 170-177 (GDRQTGKT).

It belongs to the ATPase alpha/beta chains family. As to quaternary structure, F-type ATPases have 2 components, CF(1) - the catalytic core - and CF(0) - the membrane proton channel. CF(1) has five subunits: alpha(3), beta(3), gamma(1), delta(1), epsilon(1). CF(0) has four main subunits: a, b, b' and c.

It is found in the plastid. It localises to the chloroplast thylakoid membrane. It catalyses the reaction ATP + H2O + 4 H(+)(in) = ADP + phosphate + 5 H(+)(out). In terms of biological role, produces ATP from ADP in the presence of a proton gradient across the membrane. The alpha chain is a regulatory subunit. The chain is ATP synthase subunit alpha, chloroplastic from Chlorokybus atmophyticus (Soil alga).